The following is a 104-amino-acid chain: L-rhamnose mutarotase (104 aa).

Tyrosine 18 serves as a coordination point for substrate. Residue histidine 22 is the Proton donor of the active site. Residues tyrosine 41 and 76–77 (WW) contribute to the substrate site.

This sequence belongs to the rhamnose mutarotase family. In terms of assembly, homodimer.

It is found in the cytoplasm. The catalysed reaction is alpha-L-rhamnose = beta-L-rhamnose. The protein operates within carbohydrate metabolism; L-rhamnose metabolism. Involved in the anomeric conversion of L-rhamnose. The chain is L-rhamnose mutarotase from Lactiplantibacillus plantarum (strain ATCC BAA-793 / NCIMB 8826 / WCFS1) (Lactobacillus plantarum).